Consider the following 130-residue polypeptide: Protein ApaG (130 aa).

Positions 3-127 (RAVTRHIEVT…FSLDSPDGKR (125 aa)) constitute an ApaG domain.

This chain is Protein ApaG, found in Bradyrhizobium sp. (strain ORS 278).